Here is a 418-residue protein sequence, read N- to C-terminus: Gamma-glutamyl phosphate reductase (418 aa).

The protein belongs to the gamma-glutamyl phosphate reductase family.

The protein localises to the cytoplasm. It carries out the reaction L-glutamate 5-semialdehyde + phosphate + NADP(+) = L-glutamyl 5-phosphate + NADPH + H(+). It participates in amino-acid biosynthesis; L-proline biosynthesis; L-glutamate 5-semialdehyde from L-glutamate: step 2/2. Functionally, catalyzes the NADPH-dependent reduction of L-glutamate 5-phosphate into L-glutamate 5-semialdehyde and phosphate. The product spontaneously undergoes cyclization to form 1-pyrroline-5-carboxylate. In Desulfosudis oleivorans (strain DSM 6200 / JCM 39069 / Hxd3) (Desulfococcus oleovorans), this protein is Gamma-glutamyl phosphate reductase.